The chain runs to 420 residues: Glycogen synthase kinase-3 beta (420 aa).

The segment covering 1 to 22 (MSGRPRTTSFAESCKPVQQPSA) has biased composition (polar residues). The tract at residues 1–53 (MSGRPRTTSFAESCKPVQQPSAFGSMKVSRDKDGSKVTTVVATPGQGPDRPQE) is disordered. Residue Ser9 is modified to Phosphoserine; by PKB/AKT1, RPS6KA3 and SGK3. Cys14 carries the S-palmitoyl cysteine lipid modification. One can recognise a Protein kinase domain in the interval 56-340 (YTDTKVIGNG…PLEACAHSFF (285 aa)). ATP contacts are provided by residues 62–70 (IGNGSFGVV) and Lys85. The active-site Proton acceptor is the Asp181. Tyr216 bears the Phosphotyrosine mark. Over residues 386–401 (AAASTPTNATAASDAN) the composition is skewed to low complexity. Residues 386–420 (AAASTPTNATAASDANTGDRGQTNNAASASASNST) form a disordered region. Residue Ser389 is modified to Phosphoserine. A phosphothreonine mark is found at Thr390 and Thr402. Low complexity predominate over residues 409–420 (NNAASASASNST).

Belongs to the protein kinase superfamily. CMGC Ser/Thr protein kinase family. GSK-3 subfamily. In terms of assembly, monomer. Interacts with ARRB2, DISC1 and ZBED3. Interacts with CABYR, MMP2, MUC1, NIN and PRUNE1. Interacts with AXIN1; the interaction mediates hyperphosphorylation of CTNNB1 leading to its ubiquitination and destruction. Interacts with and phosphorylates SNAI1. Interacts with DNM1L (via a C-terminal domain). Found in a complex composed of MACF1, APC, AXIN1, CTNNB1 and GSK3B. Interacts with SGK3. Interacts with DAB2IP (via C2 domain); the interaction stimulates GSK3B kinase activation. Interacts (via C2 domain) with PPP2CA. Interacts with the CLOCK-BMAL1 heterodimer. Interacts with the BMAL1. Interacts with CTNND2. Interacts with NCYM. The complex composed, at least, of APC, CTNNB1 and GSK3B interacts with JPT1; the interaction requires the inactive form of GSK3B (phosphorylated at 'Ser-9'). Forms a complex composed of PRKAR2A or PRKAR2B, GSK3B and GSKIP through GSKIP interaction; facilitates PKA-induced phosphorylation and regulates GSK3B activity. Interacts with GSKIP. Interacts with GID8. Interacts with PIWIL2. Interacts with LMBR1L. Interacts with DDX3X. Interacts with BIRC2. Interacts with TNFRSF10B; TNFRSF10B stimulation inhibits GSK3B kinase activity. Interacts with RICTOR; the interaction results in phosphorylation of RICTOR at 'Thr-1695' by GSK3B which facilitates FBXW7-mediated ubiquitination and subsequent degradation of RICTOR. Found in a complex with SLC39A6, SLC39A10 and with GSK3B that controls NCAM1 phosphorylation. Interacts with PKP3 (via ARM repeats); the interaction may be involved in PKP3 protein degradation. In terms of processing, phosphorylated by AKT1 and ILK1. Upon insulin-mediated signaling, the activated PKB/AKT1 protein kinase phosphorylates and deactivates GSK3B, resulting in the dephosphorylation and activation of GYS1. Activated by phosphorylation at Tyr-216. Inactivated by phosphorylation at Ser-9. Phosphorylated in a circadian manner in the hippocampus. Post-translationally, mono-ADP-ribosylation by PARP10 negatively regulates kinase activity. Palmitoylated. Palmitoylation by ZDHHC4 prevents AKT1-mediated phosphorylation. In terms of tissue distribution, expressed in testis, thymus, prostate and ovary and weakly expressed in lung, brain and kidney. Colocalizes with EIF2AK2/PKR and TAU in the Alzheimer disease (AD) brain.

It localises to the cytoplasm. It is found in the nucleus. The protein localises to the cell membrane. The catalysed reaction is L-seryl-[tau protein] + ATP = O-phospho-L-seryl-[tau protein] + ADP + H(+). It carries out the reaction L-threonyl-[tau protein] + ATP = O-phospho-L-threonyl-[tau protein] + ADP + H(+). The enzyme catalyses L-seryl-[protein] + ATP = O-phospho-L-seryl-[protein] + ADP + H(+). It catalyses the reaction L-threonyl-[protein] + ATP = O-phospho-L-threonyl-[protein] + ADP + H(+). Its activity is regulated as follows. Activated by phosphorylation at Tyr-216. In response to insulin, inhibited by phosphorylation at Ser-9 by PKB/AKT1 and RPS6KA3; phosphorylation at this site causes a conformational change, preventing access of substrates to the active site. Inhibited by IL22 treatment which also triggers phosphorylation at Ser-9, promoting inactivation. Inhibited by lithium. Its function is as follows. Constitutively active protein kinase that acts as a negative regulator in the hormonal control of glucose homeostasis, Wnt signaling and regulation of transcription factors and microtubules, by phosphorylating and inactivating glycogen synthase (GYS1 or GYS2), EIF2B, CTNNB1/beta-catenin, APC, AXIN1, DPYSL2/CRMP2, JUN, NFATC1/NFATC, MAPT/TAU and MACF1. Requires primed phosphorylation of the majority of its substrates. In skeletal muscle, contributes to insulin regulation of glycogen synthesis by phosphorylating and inhibiting GYS1 activity and hence glycogen synthesis. May also mediate the development of insulin resistance by regulating activation of transcription factors. Regulates protein synthesis by controlling the activity of initiation factor 2B (EIF2BE/EIF2B5) in the same manner as glycogen synthase. In Wnt signaling, GSK3B forms a multimeric complex with APC, AXIN1 and CTNNB1/beta-catenin and phosphorylates the N-terminus of CTNNB1 leading to its degradation mediated by ubiquitin/proteasomes. Phosphorylates JUN at sites proximal to its DNA-binding domain, thereby reducing its affinity for DNA. Phosphorylates NFATC1/NFATC on conserved serine residues promoting NFATC1/NFATC nuclear export, shutting off NFATC1/NFATC gene regulation, and thereby opposing the action of calcineurin. Phosphorylates MAPT/TAU on 'Thr-548', decreasing significantly MAPT/TAU ability to bind and stabilize microtubules. MAPT/TAU is the principal component of neurofibrillary tangles in Alzheimer disease. Plays an important role in ERBB2-dependent stabilization of microtubules at the cell cortex. Phosphorylates MACF1, inhibiting its binding to microtubules which is critical for its role in bulge stem cell migration and skin wound repair. Probably regulates NF-kappa-B (NFKB1) at the transcriptional level and is required for the NF-kappa-B-mediated anti-apoptotic response to TNF-alpha (TNF/TNFA). Negatively regulates replication in pancreatic beta-cells, resulting in apoptosis, loss of beta-cells and diabetes. Through phosphorylation of the anti-apoptotic protein MCL1, may control cell apoptosis in response to growth factors deprivation. Phosphorylates MUC1 in breast cancer cells, decreasing the interaction of MUC1 with CTNNB1/beta-catenin. Is necessary for the establishment of neuronal polarity and axon outgrowth. Phosphorylates MARK2, leading to inhibition of its activity. Phosphorylates SIK1 at 'Thr-182', leading to sustainment of its activity. Phosphorylates ZC3HAV1 which enhances its antiviral activity. Phosphorylates SNAI1, leading to its ubiquitination and proteasomal degradation. Phosphorylates SFPQ at 'Thr-687' upon T-cell activation. Phosphorylates NR1D1 st 'Ser-55' and 'Ser-59' and stabilizes it by protecting it from proteasomal degradation. Regulates the circadian clock via phosphorylation of the major clock components including BMAL1, CLOCK and PER2. Phosphorylates FBXL2 at 'Thr-404' and primes it for ubiquitination by the SCF(FBXO3) complex and proteasomal degradation. Phosphorylates CLOCK AT 'Ser-427' and targets it for proteasomal degradation. Phosphorylates BMAL1 at 'Ser-17' and 'Ser-21' and primes it for ubiquitination and proteasomal degradation. Phosphorylates OGT at 'Ser-3' or 'Ser-4' which positively regulates its activity. Phosphorylates MYCN in neuroblastoma cells which may promote its degradation. Regulates the circadian rhythmicity of hippocampal long-term potentiation and BMAL1 and PER2 expression. Acts as a regulator of autophagy by mediating phosphorylation of KAT5/TIP60 under starvation conditions, activating KAT5/TIP60 acetyltransferase activity and promoting acetylation of key autophagy regulators, such as ULK1 and RUBCNL/Pacer. Negatively regulates extrinsic apoptotic signaling pathway via death domain receptors. Promotes the formation of an anti-apoptotic complex, made of DDX3X, BRIC2 and GSK3B, at death receptors, including TNFRSF10B. The anti-apoptotic function is most effective with weak apoptotic signals and can be overcome by stronger stimulation. Phosphorylates E2F1, promoting the interaction between E2F1 and USP11, stabilizing E2F1 and promoting its activity. Phosphorylates mTORC2 complex component RICTOR at 'Ser-1235' in response to endoplasmic stress, inhibiting mTORC2. Phosphorylates mTORC2 complex component RICTOR at 'Thr-1695' which facilitates FBXW7-mediated ubiquitination and subsequent degradation of RICTOR. Phosphorylates FXR1, promoting FXR1 ubiquitination by the SCF(FBXO4) complex and FXR1 degradation by the proteasome. Phosphorylates interleukin-22 receptor subunit IL22RA1, preventing its proteasomal degradation. The chain is Glycogen synthase kinase-3 beta from Homo sapiens (Human).